Reading from the N-terminus, the 88-residue chain is Large ribosomal subunit protein bL31B (88 aa).

This sequence belongs to the bacterial ribosomal protein bL31 family. Type B subfamily. Part of the 50S ribosomal subunit.

The sequence is that of Large ribosomal subunit protein bL31B from Paraburkholderia xenovorans (strain LB400).